The sequence spans 457 residues: MKRLAKAAFSQNSLTAPIVSTFVYLISVVRVVLNGNWPVTSSDTAMFQHIGWMVFSGKRYYIDAWDPKPPLTLELATIIAYISNGDPHLQHTLSVVSTIVAGILLTYLISHITSEITGNQFAGLLSGIVFITFPVIHYSAVFGYEPKYFVFLFGLGSIYLSRNPKPILSGAAAAASAGMWQFAIIFPIISFGIISRRKSKDLILKYVFGATIIAFISLLPIYLQGGLVAMTVEVIIAPLYAGETQSFLYRLVKGVTHLKLMIPIALLGMAGILLGFLDDIRERWWVVGLLLWFCIQIFILDYDGADDLFLGIILVSMGIGFAFEKLSTKYESERINSIVTAVVVCMLIWQVVTLGGVGVITNPYSYSGDGPDQAILESGIQQFAHLSGYTEYTIGGSPPDEQYNVKSRYGPDKIEELFFTSTIPSTCHYRLSGMELEWMNLTEQSFTEEKCGKWRLP.

Residues 1–12 are Cytoplasmic-facing; it reads MKRLAKAAFSQN. The chain crosses the membrane as a helical span at residues 13–33; sequence SLTAPIVSTFVYLISVVRVVL. Residues 34–91 lie on the Extracellular side of the membrane; sequence NGNWPVTSSDTAMFQHIGWMVFSGKRYYIDAWDPKPPLTLELATIIAYISNGDPHLQH. Residues 92–112 traverse the membrane as a helical segment; the sequence is TLSVVSTIVAGILLTYLISHI. The Cytoplasmic portion of the chain corresponds to 113–120; that stretch reads TSEITGNQ. A helical membrane pass occupies residues 121-141; the sequence is FAGLLSGIVFITFPVIHYSAV. Over 142 to 173 the chain is Extracellular; sequence FGYEPKYFVFLFGLGSIYLSRNPKPILSGAAA. A helical membrane pass occupies residues 174–194; the sequence is AASAGMWQFAIIFPIISFGII. The Cytoplasmic segment spans residues 195–211; the sequence is SRRKSKDLILKYVFGAT. A helical transmembrane segment spans residues 212–232; the sequence is IIAFISLLPIYLQGGLVAMTV. The Extracellular segment spans residues 233–259; that stretch reads EVIIAPLYAGETQSFLYRLVKGVTHLK. The helical transmembrane segment at 260–280 threads the bilayer; that stretch reads LMIPIALLGMAGILLGFLDDI. Residues 281 to 283 are Cytoplasmic-facing; that stretch reads RER. Residues 284–304 form a helical membrane-spanning segment; that stretch reads WWVVGLLLWFCIQIFILDYDG. Residues 305–307 lie on the Extracellular side of the membrane; it reads ADD. Residues 308–328 form a helical membrane-spanning segment; the sequence is LFLGIILVSMGIGFAFEKLST. Residues 329 to 337 are Cytoplasmic-facing; that stretch reads KYESERINS. The helical transmembrane segment at 338–358 threads the bilayer; it reads IVTAVVVCMLIWQVVTLGGVG. At 359-457 the chain is on the extracellular side; it reads VITNPYSYSG…EEKCGKWRLP (99 aa).

The protein resides in the cell membrane. The protein operates within cell surface structure biogenesis; S-layer biogenesis. It participates in protein modification; protein glycosylation. In terms of biological role, involved in the assembly of a N-linked pentasaccharide that decorates the S-layer glycoprotein and flagellins. Transfers mannose, the terminal pentasaccharide residue, from its dedicated dolichol phosphate carrier to the protein-bound glycan comprising the first four subunits of the N-linked pentasaccharide. The protein is Dolichol phosphate-mannose mannosyltransferase (aglS) of Haloferax volcanii (strain ATCC 29605 / DSM 3757 / JCM 8879 / NBRC 14742 / NCIMB 2012 / VKM B-1768 / DS2) (Halobacterium volcanii).